Here is a 799-residue protein sequence, read N- to C-terminus: Histidine biosynthesis trifunctional protein (799 aa).

A phosphoribosyl-AMP cyclohydrolase region spans residues 1–229 (MVLPILPLID…FIVEQENVGF (229 aa)). A phosphoribosyl-ATP pyrophosphohydrolase region spans residues 230 to 312 (CHLETMSCFG…FYFALAKLVA (83 aa)). Residues 313–799 (NDVSLKDVEN…KLGLIPKDFQ (487 aa)) are histidinol dehydrogenase. Residues Q618 and H621 each contribute to the Zn(2+) site. Active-site residues include E687 and H688. The Zn(2+) site is built by D721 and H780.

It in the C-terminal section; belongs to the histidinol dehydrogenase family. The cofactor is Zn(2+).

It catalyses the reaction 1-(5-phospho-beta-D-ribosyl)-5'-AMP + H2O = 1-(5-phospho-beta-D-ribosyl)-5-[(5-phospho-beta-D-ribosylamino)methylideneamino]imidazole-4-carboxamide. It carries out the reaction 1-(5-phospho-beta-D-ribosyl)-ATP + H2O = 1-(5-phospho-beta-D-ribosyl)-5'-AMP + diphosphate + H(+). The enzyme catalyses L-histidinol + 2 NAD(+) + H2O = L-histidine + 2 NADH + 3 H(+). It functions in the pathway amino-acid biosynthesis; L-histidine biosynthesis; L-histidine from 5-phospho-alpha-D-ribose 1-diphosphate: step 2/9. It participates in amino-acid biosynthesis; L-histidine biosynthesis; L-histidine from 5-phospho-alpha-D-ribose 1-diphosphate: step 3/9. The protein operates within amino-acid biosynthesis; L-histidine biosynthesis; L-histidine from 5-phospho-alpha-D-ribose 1-diphosphate: step 9/9. This chain is Histidine biosynthesis trifunctional protein, found in Saccharomyces cerevisiae (strain ATCC 204508 / S288c) (Baker's yeast).